We begin with the raw amino-acid sequence, 156 residues long: Small ribosomal subunit protein uS7 (156 aa).

This sequence belongs to the universal ribosomal protein uS7 family. Part of the 30S ribosomal subunit. Contacts proteins S9 and S11.

One of the primary rRNA binding proteins, it binds directly to 16S rRNA where it nucleates assembly of the head domain of the 30S subunit. Is located at the subunit interface close to the decoding center, probably blocks exit of the E-site tRNA. This chain is Small ribosomal subunit protein uS7, found in Methylorubrum populi (strain ATCC BAA-705 / NCIMB 13946 / BJ001) (Methylobacterium populi).